Reading from the N-terminus, the 645-residue chain is ATP-dependent zinc metalloprotease FtsH (645 aa).

The Cytoplasmic segment spans residues 1 to 6 (MDQRPK). A helical membrane pass occupies residues 7–27 (FGMILFYIVLGVFLMVALRGL). At 28 to 110 (YTTDTNLSVP…VVYEKGNDSL (83 aa)) the chain is on the periplasmic side. A helical membrane pass occupies residues 111–131 (FWVNLLGTIIPLAIIVFIWFF). Over 132-645 (AMRSLSGRNS…AKEGNEDEKN (514 aa)) the chain is Cytoplasmic. Residue 204–211 (GPPGTGKT) participates in ATP binding. H426 contacts Zn(2+). E427 is an active-site residue. Residues H430 and D503 each coordinate Zn(2+). The disordered stretch occupies residues 623-645 (SKRKVSAVSTNEEAKEGNEDEKN). The segment covering 634–645 (EEAKEGNEDEKN) has biased composition (basic and acidic residues).

The protein in the central section; belongs to the AAA ATPase family. In the C-terminal section; belongs to the peptidase M41 family. As to quaternary structure, homohexamer. Zn(2+) is required as a cofactor.

Its subcellular location is the cell inner membrane. Functionally, acts as a processive, ATP-dependent zinc metallopeptidase for both cytoplasmic and membrane proteins. Plays a role in the quality control of integral membrane proteins. The sequence is that of ATP-dependent zinc metalloprotease FtsH from Kosmotoga olearia (strain ATCC BAA-1733 / DSM 21960 / TBF 19.5.1).